The primary structure comprises 338 residues: Lipoate-protein ligase A (338 aa).

Residues 29 to 216 (PATQRVLFLW…AFFAHYGERV (188 aa)) enclose the BPL/LPL catalytic domain. ATP is bound by residues arginine 71, 76–79 (GAVF), and lysine 134. Residue lysine 134 participates in (R)-lipoate binding.

It belongs to the LplA family. As to quaternary structure, monomer.

The protein resides in the cytoplasm. The catalysed reaction is L-lysyl-[lipoyl-carrier protein] + (R)-lipoate + ATP = N(6)-[(R)-lipoyl]-L-lysyl-[lipoyl-carrier protein] + AMP + diphosphate + H(+). It functions in the pathway protein modification; protein lipoylation via exogenous pathway; protein N(6)-(lipoyl)lysine from lipoate: step 1/2. It participates in protein modification; protein lipoylation via exogenous pathway; protein N(6)-(lipoyl)lysine from lipoate: step 2/2. Functionally, catalyzes both the ATP-dependent activation of exogenously supplied lipoate to lipoyl-AMP and the transfer of the activated lipoyl onto the lipoyl domains of lipoate-dependent enzymes. This is Lipoate-protein ligase A from Escherichia coli O81 (strain ED1a).